Consider the following 204-residue polypeptide: Probable UMP-CMP kinase 1 (204 aa).

31 to 36 (GSGKGT) provides a ligand contact to ATP. Residues 51 to 80 (SAGDLLRAEIKSGSEFGAMIQSMIAEGRIV) are NMP. Residues Arg-57, 78–80 (RIV), and 105–108 (GFPR) each bind a ribonucleoside 5'-phosphate. CMP is bound at residue Asn-112. An LID region spans residues 143 to 151 (SRNQGREDD). Arg-144 contacts ATP. A ribonucleoside 5'-phosphate is bound by residues Arg-148 and Arg-159. Lys-187 provides a ligand contact to ATP.

It belongs to the adenylate kinase family. UMP-CMP kinase subfamily. As to quaternary structure, monomer. Requires Mg(2+) as cofactor.

The protein localises to the cytoplasm. The protein resides in the nucleus. It carries out the reaction CMP + ATP = CDP + ADP. The enzyme catalyses dCMP + ATP = dCDP + ADP. It catalyses the reaction UMP + ATP = UDP + ADP. Its function is as follows. Catalyzes the phosphorylation of pyrimidine nucleoside monophosphates at the expense of ATP. Plays an important role in de novo pyrimidine nucleotide biosynthesis. Has preference for UMP and CMP as phosphate acceptors. In Arabidopsis thaliana (Mouse-ear cress), this protein is Probable UMP-CMP kinase 1 (UMK1).